A 368-amino-acid chain; its full sequence is Probable dual-specificity RNA methyltransferase RlmN (368 aa).

Glu100 functions as the Proton acceptor in the catalytic mechanism. A Radical SAM core domain is found at 106 to 344 (QHYGLSVCVT…CVVRQEHGTD (239 aa)). Residues Cys113 and Cys349 are joined by a disulfide bond. Residues Cys120, Cys124, and Cys127 each coordinate [4Fe-4S] cluster. Residues 172-173 (GE), Ser204, 227-229 (SLH), and Asn305 each bind S-adenosyl-L-methionine. Residue Cys349 is the S-methylcysteine intermediate of the active site.

Belongs to the radical SAM superfamily. RlmN family. [4Fe-4S] cluster serves as cofactor.

The protein localises to the cytoplasm. It catalyses the reaction adenosine(2503) in 23S rRNA + 2 reduced [2Fe-2S]-[ferredoxin] + 2 S-adenosyl-L-methionine = 2-methyladenosine(2503) in 23S rRNA + 5'-deoxyadenosine + L-methionine + 2 oxidized [2Fe-2S]-[ferredoxin] + S-adenosyl-L-homocysteine. The enzyme catalyses adenosine(37) in tRNA + 2 reduced [2Fe-2S]-[ferredoxin] + 2 S-adenosyl-L-methionine = 2-methyladenosine(37) in tRNA + 5'-deoxyadenosine + L-methionine + 2 oxidized [2Fe-2S]-[ferredoxin] + S-adenosyl-L-homocysteine. Functionally, specifically methylates position 2 of adenine 2503 in 23S rRNA and position 2 of adenine 37 in tRNAs. The chain is Probable dual-specificity RNA methyltransferase RlmN from Streptococcus agalactiae serotype Ia (strain ATCC 27591 / A909 / CDC SS700).